We begin with the raw amino-acid sequence, 147 residues long: Large ribosomal subunit protein bL9 (147 aa).

Belongs to the bacterial ribosomal protein bL9 family.

In terms of biological role, binds to the 23S rRNA. This Halalkalibacterium halodurans (strain ATCC BAA-125 / DSM 18197 / FERM 7344 / JCM 9153 / C-125) (Bacillus halodurans) protein is Large ribosomal subunit protein bL9.